Reading from the N-terminus, the 591-residue chain is L-fucose isomerase (591 aa).

Catalysis depends on proton acceptor residues E337 and D361. Positions 337, 361, and 528 each coordinate Mn(2+).

Belongs to the L-fucose isomerase family. In terms of assembly, homohexamer. Requires Mn(2+) as cofactor.

The protein resides in the cytoplasm. The catalysed reaction is L-fucose = L-fuculose. Its pathway is carbohydrate degradation; L-fucose degradation; L-lactaldehyde and glycerone phosphate from L-fucose: step 1/3. Its function is as follows. Converts the aldose L-fucose into the corresponding ketose L-fuculose. The protein is L-fucose isomerase of Escherichia coli O157:H7 (strain EC4115 / EHEC).